The primary structure comprises 187 residues: Orotate phosphoribosyltransferase (187 aa).

Residues Arg-99, Lys-100, Lys-103, His-105, and Asp-125–Ser-133 each bind 5-phospho-alpha-D-ribose 1-diphosphate. Positions 129 and 157 each coordinate orotate.

Belongs to the purine/pyrimidine phosphoribosyltransferase family. PyrE subfamily. In terms of assembly, homodimer. Mg(2+) is required as a cofactor.

It catalyses the reaction orotidine 5'-phosphate + diphosphate = orotate + 5-phospho-alpha-D-ribose 1-diphosphate. It functions in the pathway pyrimidine metabolism; UMP biosynthesis via de novo pathway; UMP from orotate: step 1/2. Its function is as follows. Catalyzes the transfer of a ribosyl phosphate group from 5-phosphoribose 1-diphosphate to orotate, leading to the formation of orotidine monophosphate (OMP). This is Orotate phosphoribosyltransferase from Leptospira borgpetersenii serovar Hardjo-bovis (strain L550).